The primary structure comprises 269 residues: Protein-L-isoaspartate O-methyltransferase (269 aa).

Residues 1 to 53 (MSAGQRPAPKFPLRLDQVKPAGRSGAAPLLRPQRPLHQAATERGRGTTPAGLG) are disordered. The active site involves serine 113.

This sequence belongs to the methyltransferase superfamily. L-isoaspartyl/D-aspartyl protein methyltransferase family.

It is found in the cytoplasm. It catalyses the reaction [protein]-L-isoaspartate + S-adenosyl-L-methionine = [protein]-L-isoaspartate alpha-methyl ester + S-adenosyl-L-homocysteine. Its function is as follows. Catalyzes the methyl esterification of L-isoaspartyl residues in peptides and proteins that result from spontaneous decomposition of normal L-aspartyl and L-asparaginyl residues. It plays a role in the repair and/or degradation of damaged proteins. The protein is Protein-L-isoaspartate O-methyltransferase of Methylibium petroleiphilum (strain ATCC BAA-1232 / LMG 22953 / PM1).